We begin with the raw amino-acid sequence, 525 residues long: GMP synthase [glutamine-hydrolyzing] (525 aa).

Residues 9-207 (RILILDFGSQ…VRDICQCEAL (199 aa)) enclose the Glutamine amidotransferase type-1 domain. Cys86 acts as the Nucleophile in catalysis. Residues His181 and Glu183 contribute to the active site. In terms of domain architecture, GMPS ATP-PPase spans 208-400 (WTPAKIIDDA…LGLPYDMLYR (193 aa)). 235–241 (SGGVDSS) serves as a coordination point for ATP.

As to quaternary structure, homodimer.

It carries out the reaction XMP + L-glutamine + ATP + H2O = GMP + L-glutamate + AMP + diphosphate + 2 H(+). The protein operates within purine metabolism; GMP biosynthesis; GMP from XMP (L-Gln route): step 1/1. Catalyzes the synthesis of GMP from XMP. The sequence is that of GMP synthase [glutamine-hydrolyzing] from Salmonella newport (strain SL254).